Consider the following 195-residue polypeptide: Thymidine kinase (195 aa).

Residues 15–22 (GPMYSGKS), Glu-23, 57–58 (SH), and 88–91 (DEVQ) contribute to the ATP site. The Proton acceptor role is filled by Glu-89. Residue Phe-120 participates in substrate binding. The Zn(2+) site is built by Cys-145 and Cys-148. Residue Tyr-179 coordinates substrate. Zn(2+)-binding residues include Cys-183 and Cys-186.

This sequence belongs to the thymidine kinase family.

The protein localises to the cytoplasm. It catalyses the reaction thymidine + ATP = dTMP + ADP + H(+). The chain is Thymidine kinase from Clostridium acetobutylicum (strain ATCC 824 / DSM 792 / JCM 1419 / IAM 19013 / LMG 5710 / NBRC 13948 / NRRL B-527 / VKM B-1787 / 2291 / W).